Reading from the N-terminus, the 478-residue chain is Cytochrome c-552 (478 aa).

A signal peptide spans 1 to 27 (MKKQWTRRSAAAIAMVTTLLLSSHSFA). H91 contacts heme c. Heme contacts are provided by C119, C122, and K123. The heme c site is built by C157, C160, H161, C206, C209, and H210. Residues E212, Y213, K258, and Q260 each coordinate Ca(2+). Residue Y213 participates in substrate binding. Residue H261 coordinates substrate. Residues H272, C279, C282, H283, H298, C311, C314, H315, and H390 each coordinate heme c.

This sequence belongs to the cytochrome c-552 family. Ca(2+) is required as a cofactor. Requires heme c as cofactor.

The protein resides in the periplasm. It catalyses the reaction 6 Fe(III)-[cytochrome c] + NH4(+) + 2 H2O = 6 Fe(II)-[cytochrome c] + nitrite + 8 H(+). The protein operates within nitrogen metabolism; nitrate reduction (assimilation). Catalyzes the reduction of nitrite to ammonia, consuming six electrons in the process. The chain is Cytochrome c-552 from Aliivibrio salmonicida (strain LFI1238) (Vibrio salmonicida (strain LFI1238)).